We begin with the raw amino-acid sequence, 345 residues long: NADH-quinone oxidoreductase subunit H (345 aa).

At 1 to 15 the chain is on the lumenal side; that stretch reads MADFWATSLGQTLIL. The helical transmembrane segment at 16–35 threads the bilayer; the sequence is LAQGLGIIAFVMIGLLLLVW. Residues 36-86 are Cytoplasmic-facing; the sequence is GDRKIWAAVQMRKGPNVVGAFGLLQSVADAAKYVFKEIVVPAGVDKPVYFL. The helical transmembrane segment at 87–106 threads the bilayer; sequence APMLSLVLALLAWVVVPFNE. Over 107–110 the chain is Lumenal; it reads GWVM. A helical transmembrane segment spans residues 111 to 130; sequence ADINVAVLFVFAVSSLEVYG. Over 131 to 156 the chain is Cytoplasmic; that stretch reads VIMGGWASNSKYPFLGSLRSAAQMIS. A helical membrane pass occupies residues 157-176; sequence YEVSMGLIIVGVIISTGSMN. Residues 177–191 are Lumenal-facing; the sequence is LSAIVEAQRGDFGLL. The chain crosses the membrane as a helical span at residues 192–211; the sequence is NWYWLPHLPMVALFFISALA. Residues 212-245 are Cytoplasmic-facing; sequence ETNRPPFDLPEAESELVAGFMVEYSSTPYLLFMA. Residues 246–265 form a helical membrane-spanning segment; it reads GEYIAVWLMCALTSVLFFGG. The Lumenal segment spans residues 266–276; that stretch reads WLSPIPGVPDG. A helical transmembrane segment spans residues 277–296; that stretch reads VLWMVAKMAAVFFVFAMVKA. Over 297–313 the chain is Cytoplasmic; that stretch reads IVPRYRYDQLMRIGWKV. The helical transmembrane segment at 314-333 threads the bilayer; sequence FLPLSLAWVVVVAFLAKFEV. The Lumenal segment spans residues 334–345; sequence LGGFWARWSIGA.

The protein belongs to the complex I subunit 1 family. As to quaternary structure, NDH-1 is composed of 14 different subunits. Subunits NuoA, H, J, K, L, M, N constitute the membrane sector of the complex.

It localises to the cellular chromatophore membrane. The enzyme catalyses a quinone + NADH + 5 H(+)(in) = a quinol + NAD(+) + 4 H(+)(out). Functionally, NDH-1 shuttles electrons from NADH, via FMN and iron-sulfur (Fe-S) centers, to quinones in the respiratory chain. The immediate electron acceptor for the enzyme in this species is believed to be ubiquinone. Couples the redox reaction to proton translocation (for every two electrons transferred, four hydrogen ions are translocated across the cytoplasmic membrane), and thus conserves the redox energy in a proton gradient. This subunit may bind ubiquinone. The sequence is that of NADH-quinone oxidoreductase subunit H from Rhodobacter capsulatus (Rhodopseudomonas capsulata).